Here is an 86-residue protein sequence, read N- to C-terminus: Small ribosomal subunit protein uS17 (86 aa).

Belongs to the universal ribosomal protein uS17 family. As to quaternary structure, part of the 30S ribosomal subunit.

One of the primary rRNA binding proteins, it binds specifically to the 5'-end of 16S ribosomal RNA. This chain is Small ribosomal subunit protein uS17, found in Streptococcus pyogenes serotype M3 (strain ATCC BAA-595 / MGAS315).